Consider the following 434-residue polypeptide: Transcription elongation factor B polypeptide 3 (434 aa).

Positions 142-161 are disordered; sequence KPEPVDVHEQQASSSSMSYQ. Positions 151 to 160 are enriched in polar residues; the sequence is QQASSSSMSY. Positions 221-230 are BC box; sequence TLVSLCQTVL. In terms of domain architecture, F-box spans 237–281; it reads IDHVGIVPFDLLKPVLDHASTDQLRHILDVNPMLVEDADEMFHEM. Positions 391–415 are disordered; that stretch reads ITPRGGGVPSTSRSRSNNNNNMNNG.

As to quaternary structure, heterotrimer of an A, B and C subunit.

It is found in the nucleus. SIII, also known as elongin, is a general transcription elongation factor that increases the RNA polymerase II transcription elongation past template-encoded arresting sites. Subunit A is transcriptionally active and its transcription activity is strongly enhanced by binding to the dimeric complex of the SIII regulatory subunits B and C (elongin BC complex). This is Transcription elongation factor B polypeptide 3 from Caenorhabditis elegans.